Here is a 316-residue protein sequence, read N- to C-terminus: Transaldolase 2 (316 aa).

Residue Lys131 is the Schiff-base intermediate with substrate of the active site.

Belongs to the transaldolase family. Type 1 subfamily. Homodimer.

The protein resides in the cytoplasm. The catalysed reaction is D-sedoheptulose 7-phosphate + D-glyceraldehyde 3-phosphate = D-erythrose 4-phosphate + beta-D-fructose 6-phosphate. The protein operates within carbohydrate degradation; pentose phosphate pathway; D-glyceraldehyde 3-phosphate and beta-D-fructose 6-phosphate from D-ribose 5-phosphate and D-xylulose 5-phosphate (non-oxidative stage): step 2/3. In terms of biological role, transaldolase is important for the balance of metabolites in the pentose-phosphate pathway. The sequence is that of Transaldolase 2 from Salmonella choleraesuis (strain SC-B67).